The sequence spans 288 residues: ATP synthase gamma chain (288 aa).

Belongs to the ATPase gamma chain family. In terms of assembly, F-type ATPases have 2 components, CF(1) - the catalytic core - and CF(0) - the membrane proton channel. CF(1) has five subunits: alpha(3), beta(3), gamma(1), delta(1), epsilon(1). CF(0) has three main subunits: a, b and c.

It localises to the cell membrane. Produces ATP from ADP in the presence of a proton gradient across the membrane. The gamma chain is believed to be important in regulating ATPase activity and the flow of protons through the CF(0) complex. This chain is ATP synthase gamma chain, found in Symbiobacterium thermophilum (strain DSM 24528 / JCM 14929 / IAM 14863 / T).